Reading from the N-terminus, the 340-residue chain is L-threonine 3-dehydrogenase (340 aa).

Residue cysteine 38 participates in Zn(2+) binding. Residues threonine 40 and histidine 43 each act as charge relay system in the active site. Residues histidine 63, glutamate 64, cysteine 93, cysteine 96, cysteine 99, and cysteine 107 each coordinate Zn(2+). NAD(+) contacts are provided by residues isoleucine 175, aspartate 195, arginine 200, 262-264, and 286-287; these read LGI and IY.

This sequence belongs to the zinc-containing alcohol dehydrogenase family. As to quaternary structure, homotetramer. Zn(2+) is required as a cofactor.

It is found in the cytoplasm. It catalyses the reaction L-threonine + NAD(+) = (2S)-2-amino-3-oxobutanoate + NADH + H(+). Its pathway is amino-acid degradation; L-threonine degradation via oxydo-reductase pathway; glycine from L-threonine: step 1/2. Catalyzes the NAD(+)-dependent oxidation of L-threonine to 2-amino-3-ketobutyrate. In Pseudoalteromonas atlantica (strain T6c / ATCC BAA-1087), this protein is L-threonine 3-dehydrogenase.